Consider the following 80-residue polypeptide: MEPPKAIVKKPRLVKLGPVDPGVRRGRGFSLGELAEAGLDAKKARKLGLHVDTRRRTVHPWNVEALKKYIERLREAGVEV.

It belongs to the eukaryotic ribosomal protein eL13 family.

The sequence is that of Large ribosomal subunit protein eL13 from Aeropyrum pernix (strain ATCC 700893 / DSM 11879 / JCM 9820 / NBRC 100138 / K1).